Consider the following 88-residue polypeptide: Large ribosomal subunit protein bL27 (88 aa).

The tract at residues Met-1–Val-23 is disordered.

Belongs to the bacterial ribosomal protein bL27 family.

This Methylorubrum populi (strain ATCC BAA-705 / NCIMB 13946 / BJ001) (Methylobacterium populi) protein is Large ribosomal subunit protein bL27.